A 634-amino-acid chain; its full sequence is AAl-toxin cluster-specific transcription factor ALT13 (634 aa).

The zn(2)-C6 fungal-type DNA-binding region spans 30–56 (CENCKRRKVRCSGANPCEQCLKVNVHC). The disordered stretch occupies residues 66–89 (RRSVPNSGADKNNQQGDTDRHNGA). Residues 69-81 (VPNSGADKNNQQG) are compositionally biased toward polar residues.

It localises to the nucleus. Its function is as follows. Transcription factor that regulates the expression of the gene cluster that mediates the biosynthesis of AAL-toxins, sphinganine-analog mycotoxins responsible for Alternaria stem canker on tomato by the tomato pathotype. The chain is AAl-toxin cluster-specific transcription factor ALT13 from Alternaria alternata (Alternaria rot fungus).